A 366-amino-acid chain; its full sequence is 15-cis-zeta-carotene isomerase, chloroplastic (366 aa).

A chloroplast-targeting transit peptide spans 1–45; the sequence is MASQLRLHLAATPPLLPHRRPHLARPLCPTLNPIRAPLPPLSRVL. Helical transmembrane passes span 94–114, 136–156, 171–191, 203–223, 260–280, and 338–358; these read SWAY…VLWI, EVVM…MASL, VLFA…FINH, GITG…FFLY, VIWC…AASV, and LPYV…PLMQ.

As to expression, expressed in leaves and roots, and at lower levels in embryos and endosperm.

Its subcellular location is the plastid. It is found in the chloroplast membrane. The enzyme catalyses 9,9',15-tri-cis-zeta-carotene = 9,9'-di-cis-zeta-carotene. In terms of biological role, isomerase involved in the biosynthesis of carotenoids. Catalyzes the cis- to trans-conversion of the 15-cis-bond in 9,15,9'-tri-cis-zeta-carotene. The protein is 15-cis-zeta-carotene isomerase, chloroplastic of Zea mays (Maize).